A 318-amino-acid polypeptide reads, in one-letter code: Serpentine receptor class delta-25 (318 aa).

Transmembrane regions (helical) follow at residues 5 to 25, 38 to 58, 88 to 108, 126 to 146, 176 to 196, 226 to 246, and 258 to 278; these read LLHS…MYLA, VVIT…FFVM, HMFM…SYLF, IAFY…SIYI, ITLL…YTFI, TFKL…VAMF, and IVSV…IIFV.

Belongs to the nematode receptor-like protein srd family.

Its subcellular location is the membrane. In Caenorhabditis elegans, this protein is Serpentine receptor class delta-25 (srd-25).